The primary structure comprises 299 residues: GTPase Era (299 aa).

The Era-type G domain occupies 5–175 (RSGFVCFVGR…TNVLVSQLPP (171 aa)). The tract at residues 13-20 (GRPNTGKS) is G1. Residue 13 to 20 (GRPNTGKS) coordinates GTP. The tract at residues 39–43 (QTTRH) is G2. The tract at residues 60–63 (DTPG) is G3. Residues 60 to 64 (DTPGL) and 124 to 127 (TKID) contribute to the GTP site. Positions 124-127 (TKID) are G4. Positions 154–156 (VSA) are G5. The KH type-2 domain maps to 206–285 (VRDELPHSLA…YLDLRVKIAK (80 aa)).

This sequence belongs to the TRAFAC class TrmE-Era-EngA-EngB-Septin-like GTPase superfamily. Era GTPase family. In terms of assembly, monomer. Stays in the monomer conformation, irrespective of the presence of GTP.

Its subcellular location is the cell envelope. The protein localises to the secreted. It localises to the cell wall. Its activity is regulated as follows. Co-purified with RNA upon overexpression in E.coli, but RNAs do not appear to influence the GTPase activity. Its function is as follows. Exhibits GTPase activity. Binds RNA but is probably not involved in ribosome assembly in mycobacteria. Cannot use ATP. This Mycolicibacterium smegmatis (strain ATCC 700084 / mc(2)155) (Mycobacterium smegmatis) protein is GTPase Era.